Reading from the N-terminus, the 292-residue chain is Shikimate dehydrogenase (NADP(+)) (292 aa).

Shikimate-binding positions include 22 to 24 and S69; that span reads SLS. The Proton acceptor role is filled by K73. Shikimate is bound by residues N94 and D111. Residues 135 to 139 and I236 each bind NADP(+); that span reads GVGGA. Residue Y238 participates in shikimate binding. G260 provides a ligand contact to NADP(+).

Belongs to the shikimate dehydrogenase family. In terms of assembly, homodimer.

It carries out the reaction shikimate + NADP(+) = 3-dehydroshikimate + NADPH + H(+). It functions in the pathway metabolic intermediate biosynthesis; chorismate biosynthesis; chorismate from D-erythrose 4-phosphate and phosphoenolpyruvate: step 4/7. Functionally, involved in the biosynthesis of the chorismate, which leads to the biosynthesis of aromatic amino acids. Catalyzes the reversible NADPH linked reduction of 3-dehydroshikimate (DHSA) to yield shikimate (SA). This Streptococcus pyogenes serotype M18 (strain MGAS8232) protein is Shikimate dehydrogenase (NADP(+)).